The sequence spans 178 residues: FMN reductase (NADH) RutF (178 aa).

Belongs to the non-flavoprotein flavin reductase family. RutF subfamily.

It catalyses the reaction FMNH2 + NAD(+) = FMN + NADH + 2 H(+). Functionally, catalyzes the reduction of FMN to FMNH2 which is used to reduce pyrimidine by RutA via the Rut pathway. The chain is FMN reductase (NADH) RutF from Pseudomonas syringae pv. syringae (strain B728a).